The chain runs to 396 residues: Protein PIN-LIKES 5 (396 aa).

The Lumenal segment spans residues Met-1 to Ser-5. The chain crosses the membrane as a helical span at residues Leu-6–Phe-26. Over Met-27–Lys-45 the chain is Cytoplasmic. A helical membrane pass occupies residues Val-46 to Leu-66. Residues Glu-67–Trp-73 are Lumenal-facing. Residues Phe-74–Val-94 form a helical membrane-spanning segment. The Cytoplasmic segment spans residues Lys-95–Leu-106. Residues Ile-107–Ile-127 form a helical membrane-spanning segment. The Lumenal segment spans residues Cys-128 to Val-144. Residues Gly-145–Phe-165 form a helical membrane-spanning segment. Residues Arg-166–Glu-229 are Cytoplasmic-facing. Residues Ile-230–Ala-250 form a helical membrane-spanning segment. Residues Val-251–Lys-273 lie on the Lumenal side of the membrane. Residues Leu-274–Gly-294 traverse the membrane as a helical segment. The Cytoplasmic segment spans residues Leu-295 to Arg-312. Residues Tyr-313 to Leu-333 form a helical membrane-spanning segment. The Lumenal segment spans residues Pro-334–Pro-337. A helical transmembrane segment spans residues Leu-338–Met-358. The Cytoplasmic segment spans residues Thr-359–Ser-370. Residues Val-371–Phe-391 form a helical membrane-spanning segment. Topologically, residues Leu-392–Val-396 are lumenal.

It belongs to the auxin efflux carrier (TC 2.A.69.2) family. In terms of tissue distribution, expressed in seedlings, cauline leaves and flowers.

It localises to the endoplasmic reticulum membrane. Functionally, involved in cellular auxin homeostasis by regulating auxin metabolism. Regulates intracellular auxin accumulation at the endoplasmic reticulum and thus auxin availability for nuclear auxin signaling. The protein is Protein PIN-LIKES 5 of Arabidopsis thaliana (Mouse-ear cress).